Here is a 109-residue protein sequence, read N- to C-terminus: Oncomodulin-1 (109 aa).

Position 2 is an N-acetylserine (Ser2). EF-hand domains lie at 39–74 and 78–109; these read MSAN…FESG and LTES…MVHS. Ca(2+) contacts are provided by Asp52, Asp54, Ser56, Tyr58, Glu63, Asp91, Asp93, Asp95, Lys97, and Glu102.

The protein belongs to the parvalbumin family.

Its function is as follows. Has some calmodulin-like activity with respect to enzyme activation and growth regulation. Binds two calcium ions. This Homo sapiens (Human) protein is Oncomodulin-1 (OCM).